The primary structure comprises 237 residues: Prospore formation at selected spindle poles protein 1 (237 aa).

Its subcellular location is the nucleus. It is found in the cytoplasm. The protein resides in the cytoskeleton. It localises to the microtubule organizing center. The protein localises to the spindle pole body. In terms of biological role, involved in the pathway that organizes the shaping and sizing of the prospore membrane (PSM) during sporulation. Required to localize MPC54 to all four spindle pole bodies, and localize DON1 and SPO14 to four prospore membranes. This chain is Prospore formation at selected spindle poles protein 1 (PFS1), found in Saccharomyces cerevisiae (strain ATCC 204508 / S288c) (Baker's yeast).